The following is a 505-amino-acid chain: L-carnitine/gamma-butyrobetaine antiporter (505 aa).

Transmembrane regions (helical) follow at residues 10-30 (IEPK…WLTV), 51-71 (WGWA…WLVF), 92-112 (IFMM…SIEI), 143-163 (GPLP…FFFV), 195-215 (FYLV…TPLV), 231-251 (LDAI…ACGL), 263-283 (SYLS…SFIM), 316-336 (WTVF…IFLA), 347-367 (LCFG…TVLG), 403-423 (LSTA…VTLI), 446-466 (LLVR…LLAL), and 475-495 (AIIA…LSFI).

The protein belongs to the BCCT transporter (TC 2.A.15) family. CaiT subfamily. In terms of assembly, homotrimer.

It localises to the cell inner membrane. The enzyme catalyses 4-(trimethylamino)butanoate(in) + (R)-carnitine(out) = 4-(trimethylamino)butanoate(out) + (R)-carnitine(in). Its pathway is amine and polyamine metabolism; carnitine metabolism. Functionally, catalyzes the exchange of L-carnitine for gamma-butyrobetaine. The protein is L-carnitine/gamma-butyrobetaine antiporter of Salmonella paratyphi A (strain ATCC 9150 / SARB42).